The following is a 1227-amino-acid chain: MYLYNLTLQKATGVTHAVHGNFSGGKQQEVLLSRGKSLELLRPDSNTGKVHTLLSTEIFGCVRALMAFRLTGGTKDYIVVGSDSGRIVILEYNPSKNALEKVHQETFGKSGCRRIVPGQYFAIDPKGRAVMIGAVEKQKLAYIMNRDTQARLTISSPLEAHKSNTLTYHMVGVDVGFDNPMFACLEIDYEEADMDPSGDAAQRTQQTLTFYELDLGLNHVVRKYSEPLEEHANFLVSVPGGNDGPSGVLICSENYLTYKNLGDQHDIRCPIPRRRNDLDDPERGMIFICSATHRTKSMYFFLLQTEQGDIFKITLETDDDVVSEIKLKYFDTVPPATAMCVLKTGFLFVASEFGNHYLYQIAHLGDDDDEPEFSSAMPLEEGETFFFAPRALKNLVLVDELPSFAPIITSQVADLANEDTPQLYVLCGRGPRSTLRVLRHGLEVSEMAVSELPGNPNAVWTVKKRADDEFDAYIIVSFVNATLVLSIGETVEEVTDSGFLGTTPTLCCAALGDDALVQVYPDGIRHIRSDKRVNEWKAPGKKSITKCAVNQRQVVITLSGRELVYFEMDPTGELNEYTERSEMPAEIMCMALGTVPEGEQRSWFLAVGLADNTVRILSLDPNNCLTPCSMQALPSPAESLCLVEMGHTESTTQGGLDDDAPAQRSGNNKGTIYLNIGLSNGVLLRTVLDPVSGDLADTRTRYLGSRPVKLFRIKMQGSEAVLAMSSRTWLSYYHQNRFHLTPLSYETLEYASGFSSEQCSEGIVAISTNTLRILALEKLGAVFNQVAFPLQYTPRTFVIHPDTGRMLIAETDHNAYTEDTKSARKEQMAEEMRSAAGDEERELAREMANAFINEVLPEDVFSSPKAGLGLWASQIRCLDAMHGQTMFSVPLTQNEAIMSMAMLKFSIAADGRYYLAVGIAKDLQLNPRISQGGCIDIYKIDPTCSSLEFMHRTDIDEIPGALCGFQGRLLAGCGRMLRIYDFGKKKMLRKCENKHIPYQIVNIQAMGHRVYVSDVQESVFFIRYRRAENQLIIFADDTHPRWVTATTLLDYDTIAIADKFGNLSIQRLPHSVTDDVDEDPTGTKSLWDRGLLSGASQKSENICSFHVGEIIMSLQKATLIPGGSEALIYATLSGTVGAFVPFTSREDYDFFQHLEMHMRNENPPLCGRDHLSYRSSYYPVKNVLDGDLCEQYLSIEAAKQKSIAGDMFRTPNQICKKLEDIRTRYAF.

The protein belongs to the RSE1 family. In terms of assembly, identified in the spliceosome A complex; remains associated with the spliceosome throughout the splicing process. Component of the spliceosome B complex. Identified in the spliceosome C complex. Identified in the spliceosome E complex. Component of the U11/U12 snRNPs that are part of the U12-type spliceosome. Component of splicing factor SF3B complex. Identified in the SAGA transcription regulatory histone acetylation (HAT) complex; the interaction is RNA-independent.

The protein resides in the nucleus. Its function is as follows. Involved in pre-mRNA splicing as a component of the splicing factor SF3B complex, a constituent of the spliceosome. SF3B complex is required for 'A' complex assembly formed by the stable binding of U2 snRNP to the branchpoint sequence (BPS) in pre-mRNA. Sequence independent binding of SF3A/SF3B complex upstream of the branch site is essential, it may anchor U2 snRNP to the pre-mRNA. May also be involved in the assembly of the 'E' complex. Also belongs to the minor U12-dependent spliceosome, which is involved in the splicing of rare class of nuclear pre-mRNA intron. The chain is Splicing factor 3B subunit 3 from Drosophila melanogaster (Fruit fly).